A 117-amino-acid chain; its full sequence is Large ribosomal subunit protein uL18 (117 aa).

The protein belongs to the universal ribosomal protein uL18 family. As to quaternary structure, part of the 50S ribosomal subunit; part of the 5S rRNA/L5/L18/L25 subcomplex. Contacts the 5S and 23S rRNAs.

Functionally, this is one of the proteins that bind and probably mediate the attachment of the 5S RNA into the large ribosomal subunit, where it forms part of the central protuberance. This chain is Large ribosomal subunit protein uL18, found in Aliivibrio salmonicida (strain LFI1238) (Vibrio salmonicida (strain LFI1238)).